Reading from the N-terminus, the 351-residue chain is uncharacterized protein (351 aa).

A signal peptide spans 1–27; that stretch reads MKNKKRVLIASSLSCAILLLSAATTQA. The disordered stretch occupies residues 29-71; it reads SAHKDSQDQNKKEHVDKSQQKDKRNVTNKDKNSTVPDDIGKNG. Residues 30 to 60 are compositionally biased toward basic and acidic residues; that stretch reads AHKDSQDQNKKEHVDKSQQKDKRNVTNKDKN.

It belongs to the aerolysin family.

This is an uncharacterized protein from Staphylococcus aureus (strain Mu50 / ATCC 700699).